The primary structure comprises 227 residues: Cytochrome c oxidase subunit 2 (227 aa).

Over Met-1–Ser-14 the chain is Mitochondrial intermembrane. A helical membrane pass occupies residues Pro-15 to Met-45. Topologically, residues Leu-46–Gln-59 are mitochondrial matrix. Residues Glu-60–Met-87 form a helical membrane-spanning segment. The Mitochondrial intermembrane portion of the chain corresponds to Asp-88–Thr-227. 6 residues coordinate Cu cation: His-161, Cys-196, Glu-198, Cys-200, His-204, and Met-207. Glu-198 lines the Mg(2+) pocket.

Belongs to the cytochrome c oxidase subunit 2 family. Component of the cytochrome c oxidase (complex IV, CIV), a multisubunit enzyme composed of 14 subunits. The complex is composed of a catalytic core of 3 subunits MT-CO1, MT-CO2 and MT-CO3, encoded in the mitochondrial DNA, and 11 supernumerary subunits COX4I, COX5A, COX5B, COX6A, COX6B, COX6C, COX7A, COX7B, COX7C, COX8 and NDUFA4, which are encoded in the nuclear genome. The complex exists as a monomer or a dimer and forms supercomplexes (SCs) in the inner mitochondrial membrane with NADH-ubiquinone oxidoreductase (complex I, CI) and ubiquinol-cytochrome c oxidoreductase (cytochrome b-c1 complex, complex III, CIII), resulting in different assemblies (supercomplex SCI(1)III(2)IV(1) and megacomplex MCI(2)III(2)IV(2)). Found in a complex with TMEM177, COA6, COX18, COX20, SCO1 and SCO2. Interacts with TMEM177 in a COX20-dependent manner. Interacts with COX20. Interacts with COX16. Cu cation serves as cofactor.

Its subcellular location is the mitochondrion inner membrane. It carries out the reaction 4 Fe(II)-[cytochrome c] + O2 + 8 H(+)(in) = 4 Fe(III)-[cytochrome c] + 2 H2O + 4 H(+)(out). Its function is as follows. Component of the cytochrome c oxidase, the last enzyme in the mitochondrial electron transport chain which drives oxidative phosphorylation. The respiratory chain contains 3 multisubunit complexes succinate dehydrogenase (complex II, CII), ubiquinol-cytochrome c oxidoreductase (cytochrome b-c1 complex, complex III, CIII) and cytochrome c oxidase (complex IV, CIV), that cooperate to transfer electrons derived from NADH and succinate to molecular oxygen, creating an electrochemical gradient over the inner membrane that drives transmembrane transport and the ATP synthase. Cytochrome c oxidase is the component of the respiratory chain that catalyzes the reduction of oxygen to water. Electrons originating from reduced cytochrome c in the intermembrane space (IMS) are transferred via the dinuclear copper A center (CU(A)) of subunit 2 and heme A of subunit 1 to the active site in subunit 1, a binuclear center (BNC) formed by heme A3 and copper B (CU(B)). The BNC reduces molecular oxygen to 2 water molecules using 4 electrons from cytochrome c in the IMS and 4 protons from the mitochondrial matrix. The sequence is that of Cytochrome c oxidase subunit 2 (MT-CO2) from Georychus capensis (Cape mole rat).